Consider the following 283-residue polypeptide: uncharacterized protein (283 aa).

Positions 1 to 23 are cleaved as a signal peptide; the sequence is MFAFASFAISAIFFLCSFSYVSS.

It is found in the secreted. This is an uncharacterized protein from Schizosaccharomyces pombe (strain 972 / ATCC 24843) (Fission yeast).